Reading from the N-terminus, the 386-residue chain is Formate-dependent phosphoribosylglycinamide formyltransferase (386 aa).

N(1)-(5-phospho-beta-D-ribosyl)glycinamide-binding positions include 15–16 and Glu75; that span reads EL. Residues Arg107, Lys148, 153-158, 188-191, and Glu196 contribute to the ATP site; these read SSGKGQ and EQFI. Positions 112 to 301 constitute an ATP-grasp domain; it reads ALAAQQLNLQ…EFELHLRAIV (190 aa). Mg(2+) is bound by residues Glu260 and Glu272. N(1)-(5-phospho-beta-D-ribosyl)glycinamide-binding positions include Asp279, Lys349, and 356–357; that span reads RR.

The protein belongs to the PurK/PurT family. As to quaternary structure, homodimer.

It carries out the reaction N(1)-(5-phospho-beta-D-ribosyl)glycinamide + formate + ATP = N(2)-formyl-N(1)-(5-phospho-beta-D-ribosyl)glycinamide + ADP + phosphate + H(+). Its pathway is purine metabolism; IMP biosynthesis via de novo pathway; N(2)-formyl-N(1)-(5-phospho-D-ribosyl)glycinamide from N(1)-(5-phospho-D-ribosyl)glycinamide (formate route): step 1/1. In terms of biological role, involved in the de novo purine biosynthesis. Catalyzes the transfer of formate to 5-phospho-ribosyl-glycinamide (GAR), producing 5-phospho-ribosyl-N-formylglycinamide (FGAR). Formate is provided by PurU via hydrolysis of 10-formyl-tetrahydrofolate. This Francisella tularensis subsp. tularensis (strain WY96-3418) protein is Formate-dependent phosphoribosylglycinamide formyltransferase.